Reading from the N-terminus, the 164-residue chain is Large ribosomal subunit protein uL11 (164 aa).

The protein belongs to the universal ribosomal protein uL11 family. In terms of assembly, part of the ribosomal stalk of the 50S ribosomal subunit. Interacts with L10 and the large rRNA to form the base of the stalk. L10 forms an elongated spine to which L12 dimers bind in a sequential fashion forming a multimeric L10(L12)X complex.

In terms of biological role, forms part of the ribosomal stalk which helps the ribosome interact with GTP-bound translation factors. This is Large ribosomal subunit protein uL11 from Pyrococcus abyssi (strain GE5 / Orsay).